A 431-amino-acid polypeptide reads, in one-letter code: Histidine--tRNA ligase (431 aa).

It belongs to the class-II aminoacyl-tRNA synthetase family. In terms of assembly, homodimer.

It localises to the cytoplasm. It carries out the reaction tRNA(His) + L-histidine + ATP = L-histidyl-tRNA(His) + AMP + diphosphate + H(+). In Leifsonia xyli subsp. xyli (strain CTCB07), this protein is Histidine--tRNA ligase (hisS).